Here is a 356-residue protein sequence, read N- to C-terminus: Sulfate/thiosulfate import ATP-binding protein CysA (356 aa).

Residues 3-237 (IEVKNLVKRF…PKNSFVFHFL (235 aa)) enclose the ABC transporter domain. 35–42 (GPSGSGKT) lines the ATP pocket.

This sequence belongs to the ABC transporter superfamily. Sulfate/tungstate importer (TC 3.A.1.6) family. In terms of assembly, the complex is composed of two ATP-binding proteins (CysA), two transmembrane proteins (CysT and CysW) and a solute-binding protein (CysP).

The protein localises to the cell inner membrane. The catalysed reaction is sulfate(out) + ATP + H2O = sulfate(in) + ADP + phosphate + H(+). It catalyses the reaction thiosulfate(out) + ATP + H2O = thiosulfate(in) + ADP + phosphate + H(+). Part of the ABC transporter complex CysAWTP involved in sulfate/thiosulfate import. Responsible for energy coupling to the transport system. The protein is Sulfate/thiosulfate import ATP-binding protein CysA of Leptospira interrogans serogroup Icterohaemorrhagiae serovar copenhageni (strain Fiocruz L1-130).